A 293-amino-acid chain; its full sequence is Phospholipid scramblase 2 (293 aa).

The disordered stretch occupies residues 1–39; the sequence is MDKQNVQMNPPHPGTNLTGPPGHIGYPGPQAGYAVPPPG. Positions 1–66 are proline-rich domain (PRD); sequence MDKQNVQMNP…GHPGAPTQVP (66 aa). At 1-270 the chain is on the cytoplasmic side; sequence MDKQNVQMNP…IQFPLDLDVK (270 aa). Threonine 143 is subject to Phosphothreonine; by PKC. 4 S-palmitoyl cysteine lipidation sites follow: cysteine 166, cysteine 167, cysteine 170, and cysteine 171. The helical transmembrane segment at 271 to 287 threads the bilayer; it reads MKAVMLGACFLIDFMFF. Residues 288-293 are Extracellular-facing; it reads EMTRGE.

Belongs to the phospholipid scramblase family. Ca(2+) is required as a cofactor.

It is found in the membrane. The enzyme catalyses a 1,2-diacyl-sn-glycero-3-phosphocholine(in) = a 1,2-diacyl-sn-glycero-3-phosphocholine(out). May catalyze calcium-induced ATP-independent rapid bidirectional and non-specific movement of phospholipids (lipid scrambling or lipid flip-flop) between the inner and outer leaflet of the plasma membrane. This chain is Phospholipid scramblase 2, found in Bos taurus (Bovine).